The chain runs to 340 residues: Flap endonuclease 1 (340 aa).

The N-domain stretch occupies residues 1–98 (MGLNLKDLVV…AEIERRKQIK (98 aa)). The Mg(2+) site is built by aspartate 27, aspartate 80, glutamate 152, glutamate 154, aspartate 173, aspartate 175, and aspartate 236. Positions 116-258 (DARKYAQQTT…TALKMIKQHS (143 aa)) are I-domain.

Belongs to the XPG/RAD2 endonuclease family. FEN1 subfamily. Interacts with PCNA. PCNA stimulates the nuclease activity without altering cleavage specificity. Mg(2+) serves as cofactor.

Functionally, structure-specific nuclease with 5'-flap endonuclease and 5'-3' exonuclease activities involved in DNA replication and repair. During DNA replication, cleaves the 5'-overhanging flap structure that is generated by displacement synthesis when DNA polymerase encounters the 5'-end of a downstream Okazaki fragment. Binds the unpaired 3'-DNA end and kinks the DNA to facilitate 5' cleavage specificity. Cleaves one nucleotide into the double-stranded DNA from the junction in flap DNA, leaving a nick for ligation. Also involved in the base excision repair (BER) pathway. Acts as a genome stabilization factor that prevents flaps from equilibrating into structures that lead to duplications and deletions. Also possesses 5'-3' exonuclease activity on nicked or gapped double-stranded DNA. This chain is Flap endonuclease 1, found in Nitrosopumilus maritimus (strain SCM1).